The chain runs to 143 residues: Large-conductance mechanosensitive channel (143 aa).

Transmembrane regions (helical) follow at residues 10-30 and 89-109; these read FAVKGNVMDLAVGVIIGGAFS and GSFITVAINFVILAFIIFLMV.

Belongs to the MscL family. Homopentamer.

The protein resides in the cell inner membrane. In terms of biological role, channel that opens in response to stretch forces in the membrane lipid bilayer. May participate in the regulation of osmotic pressure changes within the cell. This Burkholderia cenocepacia (strain ATCC BAA-245 / DSM 16553 / LMG 16656 / NCTC 13227 / J2315 / CF5610) (Burkholderia cepacia (strain J2315)) protein is Large-conductance mechanosensitive channel.